The chain runs to 373 residues: Pectin lyase D (373 aa).

The N-terminal stretch at 1–19 is a signal peptide; it reads MKYAAALTAIAALAARAAA. Disulfide bonds link cysteine 82/cysteine 101 and cysteine 91/cysteine 225. Asparagine 128 carries an N-linked (GlcNAc...) asparagine glycan. Residue arginine 255 is part of the active site. An N-linked (GlcNAc...) asparagine glycan is attached at asparagine 274. Cysteines 321 and 329 form a disulfide. N-linked (GlcNAc...) asparagine glycosylation occurs at asparagine 348. The segment covering 354–366 has biased composition (low complexity); it reads LPSADAASTSPAS. Residues 354–373 are disordered; sequence LPSADAASTSPASNAGQGNL.

The protein belongs to the polysaccharide lyase 1 family. In terms of processing, may be O-glycosylated; does not contain N-acetylglucosamine.

The protein resides in the secreted. The enzyme catalyses Eliminative cleavage of (1-&gt;4)-alpha-D-galacturonan methyl ester to give oligosaccharides with 4-deoxy-6-O-methyl-alpha-D-galact-4-enuronosyl groups at their non-reducing ends.. In terms of biological role, pectinolytic enzymes consist of four classes of enzymes: pectin lyase, polygalacturonase, pectin methylesterase and rhamnogalacturonase. Among pectinolytic enzymes, pectin lyase is the most important in depolymerization of pectin, since it cleaves internal glycosidic bonds of highly methylated pectins. This chain is Pectin lyase D (pelD), found in Aspergillus niger.